The chain runs to 87 residues: Pyocin-S1 immunity protein (87 aa).

The protein belongs to the colicins ColE2/ColE8/ColE9 and pyocins S1/S2 family.

The sequence is that of Pyocin-S1 immunity protein (imm1) from Pseudomonas aeruginosa.